A 258-amino-acid chain; its full sequence is Neurotrophin-3 (258 aa).

Positions 1–18 (MSILFYVIFLAYLRGIQG) are cleaved as a signal peptide. Positions 19–139 (NSMDQRSLPE…ANRTSPRRKR (121 aa)) are excised as a propeptide. The interval 60 to 85 (QSTLPKAEAPREPEQGEATRSEFQPM) is disordered. Basic and acidic residues predominate over residues 67–79 (EAPREPEQGEATR). Asn131 is a glycosylation site (N-linked (GlcNAc...) asparagine). Disulfide bonds link Cys153/Cys218, Cys196/Cys247, and Cys206/Cys249.

The protein belongs to the NGF-beta family. Brain and peripheral tissues.

It is found in the secreted. Functionally, seems to promote the survival of visceral and proprioceptive sensory neurons. The sequence is that of Neurotrophin-3 (Ntf3) from Mus musculus (Mouse).